A 464-amino-acid polypeptide reads, in one-letter code: 3-isopropylmalate dehydratase large subunit (464 aa).

[4Fe-4S] cluster is bound by residues Cys-345, Cys-405, and Cys-408.

The protein belongs to the aconitase/IPM isomerase family. LeuC type 1 subfamily. As to quaternary structure, heterodimer of LeuC and LeuD. [4Fe-4S] cluster serves as cofactor.

The enzyme catalyses (2R,3S)-3-isopropylmalate = (2S)-2-isopropylmalate. Its pathway is amino-acid biosynthesis; L-leucine biosynthesis; L-leucine from 3-methyl-2-oxobutanoate: step 2/4. Its function is as follows. Catalyzes the isomerization between 2-isopropylmalate and 3-isopropylmalate, via the formation of 2-isopropylmaleate. This is 3-isopropylmalate dehydratase large subunit from Bacteroides thetaiotaomicron (strain ATCC 29148 / DSM 2079 / JCM 5827 / CCUG 10774 / NCTC 10582 / VPI-5482 / E50).